The sequence spans 122 residues: Small ribosomal subunit protein uS12 (122 aa).

The interval 1–24 (MPTINQLIRKKRKSTGKKRTAPAL) is disordered. Over residues 8–20 (IRKKRKSTGKKRT) the composition is skewed to basic residues. D89 carries the 3-methylthioaspartic acid modification.

This sequence belongs to the universal ribosomal protein uS12 family. As to quaternary structure, part of the 30S ribosomal subunit. Contacts proteins S8 and S17. May interact with IF1 in the 30S initiation complex.

Functionally, with S4 and S5 plays an important role in translational accuracy. Interacts with and stabilizes bases of the 16S rRNA that are involved in tRNA selection in the A site and with the mRNA backbone. Located at the interface of the 30S and 50S subunits, it traverses the body of the 30S subunit contacting proteins on the other side and probably holding the rRNA structure together. The combined cluster of proteins S8, S12 and S17 appears to hold together the shoulder and platform of the 30S subunit. This is Small ribosomal subunit protein uS12 from Natranaerobius thermophilus (strain ATCC BAA-1301 / DSM 18059 / JW/NM-WN-LF).